Consider the following 389-residue polypeptide: MDPAMQAPLRIAMVAGEASGDMLAALLIGGLQADWPGIELCGIGGPEMARRGFTPWWPSERLAVHGYSMQMLRRLRELLGIRRQLRRRLLAHRPALFIGIDAPDFNLGLEADLRAAGVKTVHFVCPSIWAWRAHRVGQIRRSADHVLCIFPFEPALLAQHGIAATYVGHPLAALIALQPDRAAARAQLGLRADDEVLAILPGSRASEIEYLARPFFQAAALLRQTRPALKLLVPAVLPLRERIVQAAQAAGMGEQVQIIAGQSHTVLAACDATLIASGTATLEAALFKRPMVIAYRMHPLNWSLMRRQQLQPWVGLPNILCREFVVPELLQDAATPQALCAATQHWLDARRQHPPTITALERRFTALHHSLQRNTPQLAADALRTILAH.

The protein belongs to the LpxB family.

It catalyses the reaction a lipid X + a UDP-2-N,3-O-bis[(3R)-3-hydroxyacyl]-alpha-D-glucosamine = a lipid A disaccharide + UDP + H(+). It participates in bacterial outer membrane biogenesis; LPS lipid A biosynthesis. In terms of biological role, condensation of UDP-2,3-diacylglucosamine and 2,3-diacylglucosamine-1-phosphate to form lipid A disaccharide, a precursor of lipid A, a phosphorylated glycolipid that anchors the lipopolysaccharide to the outer membrane of the cell. The protein is Lipid-A-disaccharide synthase of Verminephrobacter eiseniae (strain EF01-2).